A 311-amino-acid chain; its full sequence is MSEKLIIIVGPTAVGKSALGIKVAKKINGEIISGDSMQVYKYMDIGTAKVLPEEREGVPHHLIDILEPFQKYSVALFQKEARRLIKEINERGKIPIIVGGTGLYIRSVIDPYDFTDFSFDPVFRGKLEQAAKEKGSSYLHQMLEKIDPVAAQKIHSNDLRRIIRALEVYEHTGKPISYYWERGKQSKPQYRLLYYGLTMDRALLYQRINERVDKMIEKGLIAEVKRLLQMGFKESTAMQALGYKEIVQYLEGKITLDEAIYLIKRDTRRFAKRQLTWFRRDPRIKWFDSGKESLEKITEKIITEAGVNNFL.

Residue 10 to 17 (GPTAVGKS) coordinates ATP. Substrate is bound at residue 12–17 (TAVGKS). Positions 35–38 (DSMQ) are interaction with substrate tRNA.

Belongs to the IPP transferase family. In terms of assembly, monomer. It depends on Mg(2+) as a cofactor.

The enzyme catalyses adenosine(37) in tRNA + dimethylallyl diphosphate = N(6)-dimethylallyladenosine(37) in tRNA + diphosphate. Its function is as follows. Catalyzes the transfer of a dimethylallyl group onto the adenine at position 37 in tRNAs that read codons beginning with uridine, leading to the formation of N6-(dimethylallyl)adenosine (i(6)A). This is tRNA dimethylallyltransferase from Carboxydothermus hydrogenoformans (strain ATCC BAA-161 / DSM 6008 / Z-2901).